Here is a 398-residue protein sequence, read N- to C-terminus: Inner membrane protein YjgN (398 aa).

At Met-1 to Tyr-24 the chain is on the cytoplasmic side. The chain crosses the membrane as a helical span at residues Phe-25–Trp-45. The Periplasmic segment spans residues Ala-46 to Asn-73. A helical transmembrane segment spans residues Val-74–Ala-94. A topological domain (cytoplasmic) is located at residue Asp-95. Residues Met-96–Ala-116 form a helical membrane-spanning segment. At Lys-117 to Phe-142 the chain is on the periplasmic side. A helical transmembrane segment spans residues Trp-143–Ile-163. At Ser-164–Ser-175 the chain is on the cytoplasmic side. The chain crosses the membrane as a helical span at residues Val-176–Gly-196. Residues Thr-197 to Lys-228 are Periplasmic-facing. Residues Tyr-229–Phe-249 form a helical membrane-spanning segment. At Asp-250–Lys-278 the chain is on the cytoplasmic side. Residues Met-279–Val-299 form a helical membrane-spanning segment. Over Ser-300–Ala-333 the chain is Periplasmic. The chain crosses the membrane as a helical span at residues Leu-334 to Ile-354. Over Asp-355–Leu-398 the chain is Cytoplasmic.

Its subcellular location is the cell inner membrane. The protein is Inner membrane protein YjgN (yjgN) of Escherichia coli (strain K12).